The primary structure comprises 347 residues: Holliday junction branch migration complex subunit RuvB (347 aa).

The segment at 4–185 (TDRLITPAPL…FGIISRLEFY (182 aa)) is large ATPase domain (RuvB-L). Residues Leu-24, Arg-25, Gly-66, Lys-69, Thr-70, Thr-71, 132 to 134 (EDY), Arg-175, Tyr-185, and Arg-222 each bind ATP. Thr-70 lines the Mg(2+) pocket. A small ATPAse domain (RuvB-S) region spans residues 186 to 256 (SVEELTQIVM…VADAALLMLD (71 aa)). Positions 259-347 (AIGLDVMDRK…LSADLWDEKQ (89 aa)) are head domain (RuvB-H). DNA is bound by residues Arg-295, Arg-314, and Arg-319.

It belongs to the RuvB family. Homohexamer. Forms an RuvA(8)-RuvB(12)-Holliday junction (HJ) complex. HJ DNA is sandwiched between 2 RuvA tetramers; dsDNA enters through RuvA and exits via RuvB. An RuvB hexamer assembles on each DNA strand where it exits the tetramer. Each RuvB hexamer is contacted by two RuvA subunits (via domain III) on 2 adjacent RuvB subunits; this complex drives branch migration. In the full resolvosome a probable DNA-RuvA(4)-RuvB(12)-RuvC(2) complex forms which resolves the HJ.

It localises to the cytoplasm. The enzyme catalyses ATP + H2O = ADP + phosphate + H(+). In terms of biological role, the RuvA-RuvB-RuvC complex processes Holliday junction (HJ) DNA during genetic recombination and DNA repair, while the RuvA-RuvB complex plays an important role in the rescue of blocked DNA replication forks via replication fork reversal (RFR). RuvA specifically binds to HJ cruciform DNA, conferring on it an open structure. The RuvB hexamer acts as an ATP-dependent pump, pulling dsDNA into and through the RuvAB complex. RuvB forms 2 homohexamers on either side of HJ DNA bound by 1 or 2 RuvA tetramers; 4 subunits per hexamer contact DNA at a time. Coordinated motions by a converter formed by DNA-disengaged RuvB subunits stimulates ATP hydrolysis and nucleotide exchange. Immobilization of the converter enables RuvB to convert the ATP-contained energy into a lever motion, pulling 2 nucleotides of DNA out of the RuvA tetramer per ATP hydrolyzed, thus driving DNA branch migration. The RuvB motors rotate together with the DNA substrate, which together with the progressing nucleotide cycle form the mechanistic basis for DNA recombination by continuous HJ branch migration. Branch migration allows RuvC to scan DNA until it finds its consensus sequence, where it cleaves and resolves cruciform DNA. The sequence is that of Holliday junction branch migration complex subunit RuvB from Nitrosospira multiformis (strain ATCC 25196 / NCIMB 11849 / C 71).